The primary structure comprises 367 residues: Phosphoribosylaminoimidazole-succinocarboxamide synthase (367 aa).

Belongs to the SAICAR synthetase family.

The enzyme catalyses 5-amino-1-(5-phospho-D-ribosyl)imidazole-4-carboxylate + L-aspartate + ATP = (2S)-2-[5-amino-1-(5-phospho-beta-D-ribosyl)imidazole-4-carboxamido]succinate + ADP + phosphate + 2 H(+). Its pathway is purine metabolism; IMP biosynthesis via de novo pathway; 5-amino-1-(5-phospho-D-ribosyl)imidazole-4-carboxamide from 5-amino-1-(5-phospho-D-ribosyl)imidazole-4-carboxylate: step 1/2. This chain is Phosphoribosylaminoimidazole-succinocarboxamide synthase, found in Vibrio campbellii (strain ATCC BAA-1116).